We begin with the raw amino-acid sequence, 213 residues long: Motile sperm domain-containing protein 1 (213 aa).

The MSP domain maps to 16–143 (PVFVFPTELI…KEHLTESLFF (128 aa)). Helical transmembrane passes span 159-179 (SLLT…PTLG) and 191-211 (LSVN…MAIL). The Nuclear export signal motif lies at 205-208 (LITM).

Its subcellular location is the endoplasmic reticulum membrane. The protein localises to the golgi apparatus membrane. Functionally, plays a role in differentiation and/or proliferation of mesenchymal stem cells. Proposed to be involved in epithelial-to-mesenchymal transition (EMT). However, another study suggests that it is not required for EMT or stem cell self-renewal and acts during later stages of differentiation. In Homo sapiens (Human), this protein is Motile sperm domain-containing protein 1 (MOSPD1).